Reading from the N-terminus, the 120-residue chain is Putative cysteine proteinase inhibitor 11 (120 aa).

The first 24 residues, 1–24 (MARHPGLLLILLAAVAAVATTSRA), serve as a signal peptide directing secretion. The short motif at 73–77 (QVVQG) is the Secondary area of contact element.

The protein belongs to the cystatin family. Phytocystatin subfamily.

Its subcellular location is the secreted. Its function is as follows. Specific inhibitor of cysteine proteinases. Probably involved in the regulation of endogenous processes and in defense against pests and pathogens. This Oryza sativa subsp. japonica (Rice) protein is Putative cysteine proteinase inhibitor 11.